We begin with the raw amino-acid sequence, 576 residues long: MVKKEKKANVSGKPKHSLDANRADGKKKTTETRSKSTVNRLKMYKTRPKRNAGGKILSNEYQSKELPNSRIAPDRRWFGNTRVVNQKELEYFREELQTKMSSNYNVILKERKLPMSLLTDNKKQSRVHLLDMEPFQDAFGRKTKRKRPKLVASDYEALVKKAAESQDAFEEKNGAGPSGEGGEEEDGFRDLVRHTMFEKGQSKRIWGELYKVIDSSDVIVQVIDARDPQGTRCHHLEKTLKEHHKHKHMILLLNKCDLVPAWATKGWLRVLSKEYPTLAFHASVNKSFGKGSLLSVLRQFARLKSDKQAISVGFVGYPNVGKSSVINTLRTKNVCKVAPIPGETKVWQYITLTKRIFLIDCPGVVYQSRDTETDIVLKGVVRVTNLEDASEHIGEVLRRVKKEHLQRAYKIKDWEDDHDFLLQLCKSSGKLLKGGEPDLMTGAKMILHDWQRGRIPFFVPPPKLDNVASESEVIVPGIDKEAIADNSQAAAALKAIAGIMSTQQQKDVPVQRDFYDEKDLKDDKKAKESTETDAENGTDAEEDEDAVSEDGVESDSDADEDAVSENDEEDESDSAE.

2 disordered regions span residues 1 to 61 (MVKK…SNEY) and 166 to 186 (QDAFEEKNGAGPSGEGGEEED). Residues 16–34 (HSLDANRADGKKKTTETRS) are compositionally biased toward basic and acidic residues. Basic residues predominate over residues 42 to 52 (KMYKTRPKRNA). A CP-type G domain is found at 206-367 (WGELYKVIDS…LIDCPGVVYQ (162 aa)). The DARXP motif motif lies at 224-228 (DARDP). The interval 254–257 (NKCD) is G4. 254–257 (NKCD) lines the GTP pocket. Residues 283–285 (SVN) are G5. The segment at 316–323 (GYPNVGKS) is G1. 319 to 324 (NVGKSS) serves as a coordination point for GTP. The tract at residues 342–346 (GETKV) is G2. The tract at residues 360–363 (DCPG) is G3. Residue G363 participates in GTP binding. The tract at residues 502–576 (TQQQKDVPVQ…DEEDESDSAE (75 aa)) is disordered. Positions 509 to 530 (PVQRDFYDEKDLKDDKKAKEST) are enriched in basic and acidic residues. Positions 531–576 (ETDAENGTDAEEDEDAVSEDGVESDSDADEDAVSENDEEDESDSAE) are enriched in acidic residues.

The protein belongs to the TRAFAC class YlqF/YawG GTPase family. RsgA subfamily. Interacts with the 60S ribosomal proteins RPL10AA, RPL10AB and RPL10AC. As to expression, ubiquitous, with higher levels in meristematic regions.

The protein resides in the nucleus. Its subcellular location is the nucleolus. Its activity is regulated as follows. The GTPase activity is stimulated in the presence of the 60S ribosomal subunit. Functionally, GTPase involved in pre-60S ribosomal subunit maturation. The sequence is that of Nuclear/nucleolar GTPase 2 from Arabidopsis thaliana (Mouse-ear cress).